The following is a 186-amino-acid chain: Elongation factor P (186 aa).

The protein belongs to the elongation factor P family.

It is found in the cytoplasm. Its pathway is protein biosynthesis; polypeptide chain elongation. Functionally, involved in peptide bond synthesis. Stimulates efficient translation and peptide-bond synthesis on native or reconstituted 70S ribosomes in vitro. Probably functions indirectly by altering the affinity of the ribosome for aminoacyl-tRNA, thus increasing their reactivity as acceptors for peptidyl transferase. This chain is Elongation factor P, found in Acidobacterium capsulatum (strain ATCC 51196 / DSM 11244 / BCRC 80197 / JCM 7670 / NBRC 15755 / NCIMB 13165 / 161).